A 170-amino-acid polypeptide reads, in one-letter code: uncharacterized protein (170 aa).

The protein belongs to the mimivirus L223/L227/L812 family.

This is an uncharacterized protein from Acanthamoeba polyphaga mimivirus (APMV).